We begin with the raw amino-acid sequence, 823 residues long: Leucine--tRNA ligase (823 aa).

The short motif at 42–52 (PYPSGTLHMGH) is the 'HIGH' region element. The 'KMSKS' region signature appears at 575–579 (KMSKS). Lys-578 serves as a coordination point for ATP.

This sequence belongs to the class-I aminoacyl-tRNA synthetase family.

The protein resides in the cytoplasm. It catalyses the reaction tRNA(Leu) + L-leucine + ATP = L-leucyl-tRNA(Leu) + AMP + diphosphate. The sequence is that of Leucine--tRNA ligase from Legionella pneumophila (strain Corby).